We begin with the raw amino-acid sequence, 481 residues long: Phototropic-responsive NPH3 family protein NPY4 (481 aa).

The BTB domain occupies 29 to 102 (TEIIIIIGNV…CYGITVTLNA (74 aa)). Residues 207-450 (DWWVEDLCEL…VQVLFFEQIR (244 aa)) enclose the NPH3 domain. At Tyr-391 the chain carries Phosphotyrosine. The segment at 456-481 (TGYSTPELTTTTLNTEDDEWDHEKEF) is disordered. Residues 460–469 (TPELTTTTLN) are compositionally biased toward low complexity.

It belongs to the NPH3 family. In terms of tissue distribution, expressed in the hypocotyl cells that would differentiate into vascular bundles. Highly expressed in primary root tips and radicles.

It localises to the cell membrane. The protein resides in the cytoplasm. It is found in the cytosol. It participates in protein modification; protein ubiquitination. Functionally, may act as a substrate-specific adapter of an E3 ubiquitin-protein ligase complex (CUL3-RBX1-BTB) which mediates the ubiquitination and subsequent proteasomal degradation of target proteins. Plays an essential role in auxin-mediated organogenesis and in root gravitropic responses through the control of PIN proteins (e.g. PIN1 and PIN2) polarity in the root tip endodermal cell layer and in shoot epidermis. Recruited to the plasma membrane by PINs (e.g. PIN1 and PIN2) and, in concert with AGC kinases-mediated (e.g. D6PK and PID) PINs phosphorylation, maintains their polarity through limiting lateral diffusion-based escape. In Arabidopsis thaliana (Mouse-ear cress), this protein is Phototropic-responsive NPH3 family protein NPY4.